Consider the following 1050-residue polypeptide: DNA polymerase I A, chloroplastic/mitochondrial (1050 aa).

The N-terminal 91 residues, 1 to 91 (MAMGVSLTSH…VVFNGEWELR (91 aa)), are a transit peptide targeting the chloroplast and mitochondrion. A disordered region spans residues 202–240 (PRKGLDVGDNMDVNPKGEGIQRPLISDKSSGTANGNKNT). Positions 228–240 (DKSSGTANGNKNT) are enriched in polar residues. The region spanning 312 to 490 (ELICFSIYCG…LYESMTKKLQ (179 aa)) is the 3'-5' exonuclease domain. The tract at residues 673–694 (VVEDDDVETSETQKSKTDDETD) is disordered. The segment at 717 to 1048 (AIASLCEVCS…DAKCAQNWYA (332 aa)) is polymerase.

It belongs to the DNA polymerase type-A family. Expressed in shoot apical meristem.

The protein resides in the plastid. Its subcellular location is the chloroplast. It is found in the mitochondrion. It catalyses the reaction DNA(n) + a 2'-deoxyribonucleoside 5'-triphosphate = DNA(n+1) + diphosphate. With respect to regulation, not inhibited by aphidicolin. Functionally, in addition to polymerase activity, this DNA polymerase exhibits 5'-3' exonuclease activity. Required for DNA replication and accumulation in plastids and mitochondria. May be required for DNA repair in both organelles. This is DNA polymerase I A, chloroplastic/mitochondrial (POLIA) from Arabidopsis thaliana (Mouse-ear cress).